The following is a 140-amino-acid chain: Nucleoside diphosphate kinase (140 aa).

Residues Lys-9, Phe-57, Arg-85, Thr-91, Arg-102, and Asn-112 each coordinate ATP. Catalysis depends on His-115, which acts as the Pros-phosphohistidine intermediate.

The protein belongs to the NDK family. Homotetramer. Requires Mg(2+) as cofactor.

The protein localises to the cytoplasm. The catalysed reaction is a 2'-deoxyribonucleoside 5'-diphosphate + ATP = a 2'-deoxyribonucleoside 5'-triphosphate + ADP. It carries out the reaction a ribonucleoside 5'-diphosphate + ATP = a ribonucleoside 5'-triphosphate + ADP. Its function is as follows. Major role in the synthesis of nucleoside triphosphates other than ATP. The ATP gamma phosphate is transferred to the NDP beta phosphate via a ping-pong mechanism, using a phosphorylated active-site intermediate. This chain is Nucleoside diphosphate kinase, found in Chlorobium limicola (strain DSM 245 / NBRC 103803 / 6330).